The chain runs to 478 residues: Glycogen synthase (478 aa).

Position 15 (lysine 15) interacts with ADP-alpha-D-glucose.

The protein belongs to the glycosyltransferase 1 family. Bacterial/plant glycogen synthase subfamily.

The catalysed reaction is [(1-&gt;4)-alpha-D-glucosyl](n) + ADP-alpha-D-glucose = [(1-&gt;4)-alpha-D-glucosyl](n+1) + ADP + H(+). It participates in glycan biosynthesis; glycogen biosynthesis. Functionally, synthesizes alpha-1,4-glucan chains using ADP-glucose. This Lactococcus lactis subsp. lactis (strain IL1403) (Streptococcus lactis) protein is Glycogen synthase.